The chain runs to 239 residues: Adapter protein MecA (239 aa).

Residues 118–128 (EQRTKEKEAQG) show a composition bias toward basic and acidic residues. The disordered stretch occupies residues 118–137 (EQRTKEKEAQGSKRQKSSAR).

This sequence belongs to the MecA family. As to quaternary structure, homodimer.

Its function is as follows. Enables the recognition and targeting of unfolded and aggregated proteins to the ClpC protease or to other proteins involved in proteolysis. The chain is Adapter protein MecA from Staphylococcus aureus (strain COL).